The sequence spans 161 residues: Lipoprotein signal peptidase (161 aa).

The next 3 helical transmembrane spans lie at 4-24, 61-81, and 87-107; these read LLVV…WSKY, KMIF…YLLI, and SIWY…NFID. Residues aspartate 116 and aspartate 132 contribute to the active site. Residues 127 to 147 form a helical membrane-spanning segment; that stretch reads IFNVADSTLVVGVICIFIYLI.

The protein belongs to the peptidase A8 family.

The protein resides in the cell membrane. The catalysed reaction is Release of signal peptides from bacterial membrane prolipoproteins. Hydrolyzes -Xaa-Yaa-Zaa-|-(S,diacylglyceryl)Cys-, in which Xaa is hydrophobic (preferably Leu), and Yaa (Ala or Ser) and Zaa (Gly or Ala) have small, neutral side chains.. Its pathway is protein modification; lipoprotein biosynthesis (signal peptide cleavage). Functionally, this protein specifically catalyzes the removal of signal peptides from prolipoproteins. The protein is Lipoprotein signal peptidase of Enterococcus faecalis (strain ATCC 700802 / V583).